A 391-amino-acid polypeptide reads, in one-letter code: Tryptophan synthase beta chain (391 aa).

Lys86 carries the post-translational modification N6-(pyridoxal phosphate)lysine.

This sequence belongs to the TrpB family. As to quaternary structure, tetramer of two alpha and two beta chains. It depends on pyridoxal 5'-phosphate as a cofactor.

The enzyme catalyses (1S,2R)-1-C-(indol-3-yl)glycerol 3-phosphate + L-serine = D-glyceraldehyde 3-phosphate + L-tryptophan + H2O. It participates in amino-acid biosynthesis; L-tryptophan biosynthesis; L-tryptophan from chorismate: step 5/5. Functionally, the beta subunit is responsible for the synthesis of L-tryptophan from indole and L-serine. In Vibrio metschnikovii, this protein is Tryptophan synthase beta chain.